We begin with the raw amino-acid sequence, 563 residues long: Inositol-3-phosphate synthase 1-B (563 aa).

This sequence belongs to the myo-inositol 1-phosphate synthase family. NAD(+) serves as cofactor.

The protein resides in the cytoplasm. The enzyme catalyses D-glucose 6-phosphate = 1D-myo-inositol 3-phosphate. It participates in polyol metabolism; myo-inositol biosynthesis; myo-inositol from D-glucose 6-phosphate: step 1/2. Key enzyme in myo-inositol biosynthesis pathway that catalyzes the conversion of glucose 6-phosphate to 1-myo-inositol 1-phosphate in a NAD-dependent manner. Rate-limiting enzyme in the synthesis of all inositol-containing compounds. The protein is Inositol-3-phosphate synthase 1-B (isyna1-b) of Xenopus laevis (African clawed frog).